The chain runs to 240 residues: Type II restriction enzyme DdeI (240 aa).

The catalysed reaction is Endonucleolytic cleavage of DNA to give specific double-stranded fragments with terminal 5'-phosphates.. Functionally, a P subtype restriction enzyme that recognizes the double-stranded sequence 5'-CTNAG-3' and cleaves after C-1. This is Type II restriction enzyme DdeI (ddeIR) from Desulfomicrobium norvegicum (strain DSM 1741 / NCIMB 8310) (Desulfovibrio baculatus (strain Norway 4)).